Consider the following 97-residue polypeptide: UPF0147 protein MA_0092 (97 aa).

Belongs to the UPF0147 family.

The sequence is that of UPF0147 protein MA_0092 from Methanosarcina acetivorans (strain ATCC 35395 / DSM 2834 / JCM 12185 / C2A).